Here is a 403-residue protein sequence, read N- to C-terminus: CinA-like protein (403 aa).

Belongs to the CinA family.

The sequence is that of CinA-like protein from Petrotoga mobilis (strain DSM 10674 / SJ95).